The following is a 633-amino-acid chain: Kinesin-like motor protein 9 (633 aa).

The Kinesin motor domain maps to 1 to 392; sequence MIQIFLRVKK…MRYSANAREI (392 aa). Residue 94–101 coordinates ATP; sequence GVSGAGKT. 3 disordered regions span residues 393 to 423, 531 to 556, and 575 to 633; these read LPPP…TKAL, LEEE…SRKL, and KLWP…INEL. Residues 398-423 are compositionally biased toward polar residues; the sequence is NENSGSQSPSHSLLQKSKNTSSTKAL. Residues 417 to 541 adopt a coiled-coil conformation; sequence TSSTKALTSH…EEESIKESSA (125 aa). Residues 578 to 587 are compositionally biased toward polar residues; sequence PQSTLIQAPN. Residues 604–623 show a composition bias toward low complexity; the sequence is VSPIKPLSPSRRPPLTSLYS. Phosphoserine is present on residues serine 605, serine 611, and serine 613. Polar residues predominate over residues 624-633; that stretch reads GTTDIDINEL.

It belongs to the TRAFAC class myosin-kinesin ATPase superfamily. Kinesin family. As to quaternary structure, interacts with ase1. In terms of processing, phosphorylated by cdc2 and dephosphorylated by clp1. Dephosphorylation is required for the interaction with ase1.

Its subcellular location is the nucleus. It localises to the cytoplasm. It is found in the cytoskeleton. The protein resides in the microtubule organizing center. The protein localises to the spindle pole body. Kinesin-like motor protein involved in anaphase B spindle elongation. This is Kinesin-like motor protein 9 (klp9) from Schizosaccharomyces pombe (strain 972 / ATCC 24843) (Fission yeast).